Here is a 38-residue protein sequence, read N- to C-terminus: Beta-galactosidase (38 aa).

It belongs to the glycosyl hydrolase 35 family. As to quaternary structure, heterodimer of a large and a small subunit. In terms of processing, the small subunit is N-glycosylated.

It catalyses the reaction Hydrolysis of terminal non-reducing beta-D-galactose residues in beta-D-galactosides.. Involved in cell wall degradation. Degrades polysaccharides containing beta-(1--&gt;4)-linked galactans, acting as an exo-(1--&gt;4)-beta-D-galactanase. This Hordeum vulgare (Barley) protein is Beta-galactosidase.